Here is a 902-residue protein sequence, read N- to C-terminus: Probable dipeptidyl-aminopeptidase B (902 aa).

Disordered stretches follow at residues Met-1–Asp-23 and Asp-53–Ser-72. Topologically, residues Met-1 to Gln-78 are cytoplasmic. A compositionally biased stretch (low complexity) spans Thr-7–Ser-21. The chain crosses the membrane as a helical; Signal-anchor for type II membrane protein span at residues Ile-79 to Leu-99. The Vacuolar portion of the chain corresponds to Thr-100–His-902. N-linked (GlcNAc...) asparagine glycosylation is found at Asn-335 and Asn-626. Ser-740 functions as the Charge relay system in the catalytic mechanism. 2 N-linked (GlcNAc...) asparagine glycosylation sites follow: Asn-794 and Asn-799. Catalysis depends on charge relay system residues Asp-817 and His-850.

It belongs to the peptidase S9B family.

The protein resides in the vacuole membrane. The enzyme catalyses Release of an N-terminal dipeptide, Xaa-Yaa-|-Zaa-, from a polypeptide, preferentially when Yaa is Pro, provided Zaa is neither Pro nor hydroxyproline.. In terms of biological role, type IV dipeptidyl-peptidase which removes N-terminal dipeptides sequentially from polypeptides having unsubstituted N-termini provided that the penultimate residue is proline. This Aspergillus oryzae (strain ATCC 42149 / RIB 40) (Yellow koji mold) protein is Probable dipeptidyl-aminopeptidase B (dapB).